The following is a 575-amino-acid chain: Phosphoenolpyruvate-protein phosphotransferase (575 aa).

The active-site Tele-phosphohistidine intermediate is the histidine 191. Phosphoenolpyruvate is bound by residues arginine 298 and arginine 334. Mg(2+)-binding residues include glutamate 435 and aspartate 459. Phosphoenolpyruvate-binding positions include 458 to 459 (ND) and arginine 469. Cysteine 506 serves as the catalytic Proton donor.

This sequence belongs to the PEP-utilizing enzyme family. Homodimer. Mg(2+) is required as a cofactor.

It is found in the cytoplasm. The enzyme catalyses L-histidyl-[protein] + phosphoenolpyruvate = N(pros)-phospho-L-histidyl-[protein] + pyruvate. General (non sugar-specific) component of the phosphoenolpyruvate-dependent sugar phosphotransferase system (sugar PTS). This major carbohydrate active-transport system catalyzes the phosphorylation of incoming sugar substrates concomitantly with their translocation across the cell membrane. Enzyme I transfers the phosphoryl group from phosphoenolpyruvate (PEP) to the phosphoryl carrier protein (HPr). In Lactococcus lactis subsp. cremoris (Streptococcus cremoris), this protein is Phosphoenolpyruvate-protein phosphotransferase (ptsI).